Consider the following 239-residue polypeptide: Small ribosomal subunit protein uS3 (239 aa).

The KH type-2 domain occupies 39-107 (IREFIKEECK…ELHLNIVEVR (69 aa)). Residues 212–221 (PQARDRKAQE) show a composition bias toward basic and acidic residues. The segment at 212–239 (PQARDRKAQELQDGPAPRGAGGNRRGDR) is disordered. Gly residues predominate over residues 230–239 (GAGGNRRGDR).

The protein belongs to the universal ribosomal protein uS3 family. Part of the 30S ribosomal subunit. Forms a tight complex with proteins S10 and S14.

Its function is as follows. Binds the lower part of the 30S subunit head. Binds mRNA in the 70S ribosome, positioning it for translation. The sequence is that of Small ribosomal subunit protein uS3 from Ruegeria sp. (strain TM1040) (Silicibacter sp.).